Reading from the N-terminus, the 200-residue chain is MIVGVLALQGGVEEHLTALEALGATTRKVRVPKDLDGLEGIVIPGGESTVLDKLARTFDVVEPLANLIRDGLPVFATCAGLIYLAKHLDNPARGQQTLAVVDVVVRRNAFGAQRESFDTTVDVSFDGATFPGVQASFIRAPIVTAFGPTVEAIAALNGGEVVGVRQGNIIALSFHPEETGDYRIHQAWLDLVRKHAELAI.

Glycine 46 to serine 48 is an L-glutamine binding site. The Nucleophile role is filled by cysteine 78. Residues arginine 107 and isoleucine 138–arginine 139 each bind L-glutamine. Residues histidine 175 and glutamate 177 each act as charge relay system in the active site.

This sequence belongs to the glutaminase PdxT/SNO family. As to quaternary structure, in the presence of PdxS, forms a dodecamer of heterodimers. Only shows activity in the heterodimer.

The enzyme catalyses aldehydo-D-ribose 5-phosphate + D-glyceraldehyde 3-phosphate + L-glutamine = pyridoxal 5'-phosphate + L-glutamate + phosphate + 3 H2O + H(+). It carries out the reaction L-glutamine + H2O = L-glutamate + NH4(+). The protein operates within cofactor biosynthesis; pyridoxal 5'-phosphate biosynthesis. Catalyzes the hydrolysis of glutamine to glutamate and ammonia as part of the biosynthesis of pyridoxal 5'-phosphate. The resulting ammonia molecule is channeled to the active site of PdxS. This chain is Pyridoxal 5'-phosphate synthase subunit PdxT, found in Corynebacterium glutamicum (strain ATCC 13032 / DSM 20300 / JCM 1318 / BCRC 11384 / CCUG 27702 / LMG 3730 / NBRC 12168 / NCIMB 10025 / NRRL B-2784 / 534).